Reading from the N-terminus, the 277-residue chain is Diaminopimelate epimerase (277 aa).

N13, Q46, and N65 together coordinate substrate. C74 acts as the Proton donor in catalysis. Residues 75–76, N158, N191, and 209–210 contribute to the substrate site; these read GN and ER. C218 (proton acceptor) is an active-site residue. 219–220 lines the substrate pocket; that stretch reads GT.

The protein belongs to the diaminopimelate epimerase family. As to quaternary structure, homodimer.

The protein resides in the cytoplasm. It carries out the reaction (2S,6S)-2,6-diaminopimelate = meso-2,6-diaminopimelate. It participates in amino-acid biosynthesis; L-lysine biosynthesis via DAP pathway; DL-2,6-diaminopimelate from LL-2,6-diaminopimelate: step 1/1. Functionally, catalyzes the stereoinversion of LL-2,6-diaminopimelate (L,L-DAP) to meso-diaminopimelate (meso-DAP), a precursor of L-lysine and an essential component of the bacterial peptidoglycan. In Nitrosospira multiformis (strain ATCC 25196 / NCIMB 11849 / C 71), this protein is Diaminopimelate epimerase.